We begin with the raw amino-acid sequence, 173 residues long: NADH-ubiquinone oxidoreductase chain 6 (173 aa).

The next 5 membrane-spanning stretches (helical) occupy residues 1–21, 27–47, 48–68, 87–107, and 139–159; these read MTYF…AVAS, YGVV…LSLG, ASFV…VVFV, VIGY…IGGF, and WGAG…FVVL.

The protein belongs to the complex I subunit 6 family.

It localises to the mitochondrion membrane. It catalyses the reaction a ubiquinone + NADH + 5 H(+)(in) = a ubiquinol + NAD(+) + 4 H(+)(out). Functionally, core subunit of the mitochondrial membrane respiratory chain NADH dehydrogenase (Complex I) that is believed to belong to the minimal assembly required for catalysis. Complex I functions in the transfer of electrons from NADH to the respiratory chain. The immediate electron acceptor for the enzyme is believed to be ubiquinone. The polypeptide is NADH-ubiquinone oxidoreductase chain 6 (MT-ND6) (Brachyramphus brevirostris (Kittlitz's murrelet)).